The sequence spans 76 residues: Acyl carrier protein (76 aa).

One can recognise a Carrier domain in the interval 2 to 76 (KDNFTRLQSI…QDVLNYLERN (75 aa)). O-(pantetheine 4'-phosphoryl)serine is present on Ser-37.

The protein belongs to the acyl carrier protein (ACP) family. Post-translationally, 4'-phosphopantetheine is transferred from CoA to a specific serine of apo-ACP by AcpS. This modification is essential for activity because fatty acids are bound in thioester linkage to the sulfhydryl of the prosthetic group.

The protein resides in the plastid. It is found in the chloroplast. The protein operates within lipid metabolism; fatty acid biosynthesis. Its function is as follows. Carrier of the growing fatty acid chain in fatty acid biosynthesis. The protein is Acyl carrier protein of Phaeodactylum tricornutum (strain CCAP 1055/1).